The chain runs to 89 residues: Small ribosomal subunit protein uS15 (89 aa).

It belongs to the universal ribosomal protein uS15 family. In terms of assembly, part of the 30S ribosomal subunit. Forms a bridge to the 50S subunit in the 70S ribosome, contacting the 23S rRNA.

Functionally, one of the primary rRNA binding proteins, it binds directly to 16S rRNA where it helps nucleate assembly of the platform of the 30S subunit by binding and bridging several RNA helices of the 16S rRNA. In terms of biological role, forms an intersubunit bridge (bridge B4) with the 23S rRNA of the 50S subunit in the ribosome. In Beutenbergia cavernae (strain ATCC BAA-8 / DSM 12333 / CCUG 43141 / JCM 11478 / NBRC 16432 / NCIMB 13614 / HKI 0122), this protein is Small ribosomal subunit protein uS15.